Reading from the N-terminus, the 338-residue chain is 4'-phosphopantetheinyl transferase (338 aa).

It belongs to the P-Pant transferase superfamily.

The enzyme catalyses apo-[ACP] + CoA = holo-[ACP] + adenosine 3',5'-bisphosphate + H(+). Functionally, acyl-carrier-protein synthase that transfers the 4'-phosphopantetheine moiety from coenzyme A to a Ser of an acyl-carrier-protein. The 4'-phosphopantetheine (4'-PPT) portion of CoA provides the essential prosthetic group for a number of carrier proteins and multi-domain enzymes, priming them for the acceptance of acyl building blocks in fatty acid synthesis and many aspects of secondary metabolism mediated by polyketide synthases (PKSs) and non-ribosomal peptide synthetases (NRPSs). Plays a key role in liamocins biosynthesis by activationg the HR-PKS PKS1 that produces 3,5-dihydroxydecanoic acid, a precursor of liamocins. The chain is 4'-phosphopantetheinyl transferase from Aureobasidium melanogenum (Aureobasidium pullulans var. melanogenum).